The following is a 707-amino-acid chain: UvrABC system protein C (707 aa).

Residues Ala14–Val94 enclose the GIY-YIG domain. The UVR domain occupies Gly206–Ser241. Residues Pro654–Ala684 are disordered. A compositionally biased stretch (low complexity) spans Pro658–Ala684.

This sequence belongs to the UvrC family. As to quaternary structure, interacts with UvrB in an incision complex.

It is found in the cytoplasm. Functionally, the UvrABC repair system catalyzes the recognition and processing of DNA lesions. UvrC both incises the 5' and 3' sides of the lesion. The N-terminal half is responsible for the 3' incision and the C-terminal half is responsible for the 5' incision. The polypeptide is UvrABC system protein C (Anaeromyxobacter dehalogenans (strain 2CP-C)).